Consider the following 473-residue polypeptide: 3-isopropylmalate dehydratase large subunit 2 (473 aa).

Residues Cys-350, Cys-410, and Cys-413 each coordinate [4Fe-4S] cluster.

The protein belongs to the aconitase/IPM isomerase family. LeuC type 1 subfamily. As to quaternary structure, heterodimer of LeuC and LeuD. It depends on [4Fe-4S] cluster as a cofactor.

The enzyme catalyses (2R,3S)-3-isopropylmalate = (2S)-2-isopropylmalate. It functions in the pathway amino-acid biosynthesis; L-leucine biosynthesis; L-leucine from 3-methyl-2-oxobutanoate: step 2/4. Catalyzes the isomerization between 2-isopropylmalate and 3-isopropylmalate, via the formation of 2-isopropylmaleate. This is 3-isopropylmalate dehydratase large subunit 2 from Salmonella typhimurium (strain LT2 / SGSC1412 / ATCC 700720).